Consider the following 181-residue polypeptide: uncharacterized protein (181 aa).

This is an uncharacterized protein from Rickettsia prowazekii (strain Madrid E).